The following is a 616-amino-acid chain: Protein cereblon (616 aa).

Disordered stretches follow at residues 1-39, 63-137, and 182-220; these read MDEE…DDSV, FGPS…AMPR, and SQER…DIDM. Residues 11–32 are compositionally biased toward low complexity; that stretch reads AQEQEVAGSAGEAAAGPSGAEV. Positions 96 to 107 are enriched in acidic residues; it reads SEEDIVLDDGTE. Basic and acidic residues predominate over residues 183–192; sequence QERRRSRNSD. A compositionally biased stretch (acidic residues) spans 194 to 203; the sequence is VSPEAEDDEL. Residues 206 to 215 are compositionally biased toward pro residues; it reads HPPPPPPRPP. The Lon N-terminal domain maps to 257-482; the sequence is HMLIFLHQYI…LIGGILKEET (226 aa). The 110-residue stretch at 481–590 folds into the CULT domain; the sequence is ETLFYCRYCN…LAGSSVRIGK (110 aa). Residues Cys486, Cys489, Cys555, and Cys558 each coordinate Zn(2+).

The protein belongs to the CRBN family. As to quaternary structure, likely a component of a DCX (DDB1-CUL4-X-box) protein ligase complex. May interact with pic/DDB1. In terms of processing, ubiquitinated.

Its subcellular location is the nucleus. The protein operates within protein modification; protein ubiquitination. In terms of biological role, substrate recognition component of a DCX (DDB1-CUL4-X-box) E3 protein ligase complex that mediates the ubiquitination and subsequent proteasomal degradation of target proteins. Has an essential role in mediating growth by negatively regulating insulin signaling. It also has a role in maintaining presynaptic function in the neuromuscular junction synapses of third-instar larvae. The polypeptide is Protein cereblon (Drosophila pseudoobscura pseudoobscura (Fruit fly)).